A 792-amino-acid polypeptide reads, in one-letter code: Xaa-Pro dipeptidyl-peptidase (792 aa).

Active-site charge relay system residues include Ser-363, Asp-482, and His-513.

This sequence belongs to the peptidase S15 family. In terms of assembly, homodimer.

The protein localises to the cytoplasm. It catalyses the reaction Hydrolyzes Xaa-Pro-|- bonds to release unblocked, N-terminal dipeptides from substrates including Ala-Pro-|-p-nitroanilide and (sequentially) Tyr-Pro-|-Phe-Pro-|-Gly-Pro-|-Ile.. In terms of biological role, removes N-terminal dipeptides sequentially from polypeptides having unsubstituted N-termini provided that the penultimate residue is proline. This Lactobacillus delbrueckii subsp. bulgaricus (strain ATCC 11842 / DSM 20081 / BCRC 10696 / JCM 1002 / NBRC 13953 / NCIMB 11778 / NCTC 12712 / WDCM 00102 / Lb 14) protein is Xaa-Pro dipeptidyl-peptidase.